Here is a 318-residue protein sequence, read N- to C-terminus: Porphobilinogen deaminase (318 aa).

Cys241 is modified (S-(dipyrrolylmethanemethyl)cysteine).

The protein belongs to the HMBS family. In terms of assembly, monomer. Requires dipyrromethane as cofactor.

It catalyses the reaction 4 porphobilinogen + H2O = hydroxymethylbilane + 4 NH4(+). It participates in porphyrin-containing compound metabolism; protoporphyrin-IX biosynthesis; coproporphyrinogen-III from 5-aminolevulinate: step 2/4. Its function is as follows. Tetrapolymerization of the monopyrrole PBG into the hydroxymethylbilane pre-uroporphyrinogen in several discrete steps. This chain is Porphobilinogen deaminase, found in Geobacter metallireducens (strain ATCC 53774 / DSM 7210 / GS-15).